The following is a 609-amino-acid chain: Phosphomethylpyrimidine synthase (609 aa).

Substrate contacts are provided by residues Asn219, Met248, Tyr277, His313, 333 to 335 (SRG), 374 to 377 (DGLR), and Glu413. His417 contacts Zn(2+). Tyr440 provides a ligand contact to substrate. Position 481 (His481) interacts with Zn(2+). Residues Cys561, Cys564, and Cys569 each contribute to the [4Fe-4S] cluster site.

It belongs to the ThiC family. [4Fe-4S] cluster is required as a cofactor.

The enzyme catalyses 5-amino-1-(5-phospho-beta-D-ribosyl)imidazole + S-adenosyl-L-methionine = 4-amino-2-methyl-5-(phosphooxymethyl)pyrimidine + CO + 5'-deoxyadenosine + formate + L-methionine + 3 H(+). Its pathway is cofactor biosynthesis; thiamine diphosphate biosynthesis. Functionally, catalyzes the synthesis of the hydroxymethylpyrimidine phosphate (HMP-P) moiety of thiamine from aminoimidazole ribotide (AIR) in a radical S-adenosyl-L-methionine (SAM)-dependent reaction. This chain is Phosphomethylpyrimidine synthase, found in Deinococcus geothermalis (strain DSM 11300 / CIP 105573 / AG-3a).